The following is a 222-amino-acid chain: Protein-L-isoaspartate O-methyltransferase (222 aa).

Residue Ser67 is part of the active site.

The protein belongs to the methyltransferase superfamily. L-isoaspartyl/D-aspartyl protein methyltransferase family.

The protein localises to the cytoplasm. It carries out the reaction [protein]-L-isoaspartate + S-adenosyl-L-methionine = [protein]-L-isoaspartate alpha-methyl ester + S-adenosyl-L-homocysteine. In terms of biological role, catalyzes the methyl esterification of L-isoaspartyl residues in peptides and proteins that result from spontaneous decomposition of normal L-aspartyl and L-asparaginyl residues. It plays a role in the repair and/or degradation of damaged proteins. This chain is Protein-L-isoaspartate O-methyltransferase, found in Parvibaculum lavamentivorans (strain DS-1 / DSM 13023 / NCIMB 13966).